The chain runs to 113 residues: Large ribosomal subunit protein uL22 (113 aa).

Belongs to the universal ribosomal protein uL22 family. Part of the 50S ribosomal subunit.

In terms of biological role, this protein binds specifically to 23S rRNA; its binding is stimulated by other ribosomal proteins, e.g. L4, L17, and L20. It is important during the early stages of 50S assembly. It makes multiple contacts with different domains of the 23S rRNA in the assembled 50S subunit and ribosome. Functionally, the globular domain of the protein is located near the polypeptide exit tunnel on the outside of the subunit, while an extended beta-hairpin is found that lines the wall of the exit tunnel in the center of the 70S ribosome. The sequence is that of Large ribosomal subunit protein uL22 from Xanthomonas axonopodis pv. citri (strain 306).